The chain runs to 261 residues: Syntaxin-7 (261 aa).

N-acetylserine is present on Ser2. The Cytoplasmic segment spans residues Ser2–Leu238. Residue Thr4 is modified to Phosphothreonine. Residues Glu47 to Lys68 adopt a coiled-coil conformation. Thr79 carries the post-translational modification Phosphothreonine. Ser125, Ser126, Ser129, and Ser205 each carry phosphoserine. The segment at Val128–Gln148 is disordered. The region spanning Leu165–Ala227 is the t-SNARE coiled-coil homology domain. Residues Cys239–Leu259 traverse the membrane as a helical; Anchor for type IV membrane protein segment. Residues Lys260–Gly261 are Vesicular-facing.

Belongs to the syntaxin family. As to quaternary structure, interacts with VPS11, VPS16 and VPS18. Interacts with VPS33A. Forms a SNARE complex with VTI1B, STX8 and VAMP8 which functions in the homotypic fusion of late endosomes. Component of the SNARE complex composed of STX7, STX8, VAMP7 and VTI1B that is required for heterotypic fusion of late endosomes with lysosomes. Interacts with TPC1. Detected in all tissues tested. Highest expression is found in kidney followed by lung, spleen, heart and brain. Lower expression, in skeletal muscle, liver and testis.

It localises to the early endosome membrane. In terms of biological role, may be involved in protein trafficking from the plasma membrane to the early endosome (EE) as well as in homotypic fusion of endocytic organelles. Mediates the endocytic trafficking from early endosomes to late endosomes and lysosomes. This is Syntaxin-7 (Stx7) from Rattus norvegicus (Rat).